A 208-amino-acid polypeptide reads, in one-letter code: Small ribosomal subunit protein uS4 (208 aa).

Residues 98 to 160 (CRLDNVVYRM…AKKQSRIQLA (63 aa)) form the S4 RNA-binding domain.

This sequence belongs to the universal ribosomal protein uS4 family. In terms of assembly, part of the 30S ribosomal subunit. Contacts protein S5. The interaction surface between S4 and S5 is involved in control of translational fidelity.

In terms of biological role, one of the primary rRNA binding proteins, it binds directly to 16S rRNA where it nucleates assembly of the body of the 30S subunit. With S5 and S12 plays an important role in translational accuracy. This is Small ribosomal subunit protein uS4 from Ruthia magnifica subsp. Calyptogena magnifica.